A 364-amino-acid polypeptide reads, in one-letter code: Appendage-associated protein (364 aa).

2 coiled-coil regions span residues 142 to 196 and 288 to 313; these read IIHE…AECR and RIAQAELAAAADALKRAADKLQALGK.

The protein localises to the secreted. In terms of biological role, associates with actin filament appendages that are formed in the inclusion appendages of the parasitophorous vacuole during infection of the host erythrocyte. This chain is Appendage-associated protein, found in Anaplasma marginale (strain Illinois).